The chain runs to 334 residues: MSSVQENLITNVCQDKAAKPTNKITIVGVGQVGMACAVSVLLKELADELALVDILEDKLKGEVMDLQHGSLFLKTPTIVADKDYSVTANSRIVVVTGGVRQQEGESALNLVQRNVNVFKFIIPQVVKYSPDCIIIVVSNPVDILTYVTWKLSGLPQHRIIGSGTNLDSARFRHLISEKLGVHPSSCHGFILGEHGDTSVAVWSGVNVAGVSLQSLKPEIGTDQDSCNWKEVHKKVVDSAYEVIKLKGYTNWAIGFSVAEIVESITKNLGRVHPVSTMVKGMYGIETEVFLSLPCVLNGNGLTSVISQKLKDDEVGQLQKSSETLWGIQKDLQVL.

NAD(+)-binding positions include Gly-30–Lys-58, Arg-100, and Asn-139. The substrate site is built by Asn-139 and Arg-170. The active-site Proton acceptor is the His-194. Thr-249 is a binding site for substrate.

It belongs to the LDH/MDH superfamily. LDH family. Homotetramer.

The protein resides in the cytoplasm. The catalysed reaction is (S)-lactate + NAD(+) = pyruvate + NADH + H(+). It functions in the pathway fermentation; pyruvate fermentation to lactate; (S)-lactate from pyruvate: step 1/1. The protein is L-lactate dehydrogenase C chain (ldhc) of Xenopus laevis (African clawed frog).